Reading from the N-terminus, the 275-residue chain is NAD kinase (275 aa).

Asp66 acts as the Proton acceptor in catalysis. NAD(+) contacts are provided by residues 66–67 (DG), 138–139 (NE), His168, Asp170, 181–186 (TAYNLS), and Val205.

The protein belongs to the NAD kinase family. A divalent metal cation serves as cofactor.

Its subcellular location is the cytoplasm. The enzyme catalyses NAD(+) + ATP = ADP + NADP(+) + H(+). In terms of biological role, involved in the regulation of the intracellular balance of NAD and NADP, and is a key enzyme in the biosynthesis of NADP. Catalyzes specifically the phosphorylation on 2'-hydroxyl of the adenosine moiety of NAD to yield NADP. The sequence is that of NAD kinase from Halorubrum lacusprofundi (strain ATCC 49239 / DSM 5036 / JCM 8891 / ACAM 34).